We begin with the raw amino-acid sequence, 168 residues long: Transcription antitermination protein NusB (168 aa).

This sequence belongs to the NusB family.

Its function is as follows. Involved in transcription antitermination. Required for transcription of ribosomal RNA (rRNA) genes. Binds specifically to the boxA antiterminator sequence of the ribosomal RNA (rrn) operons. The protein is Transcription antitermination protein NusB of Brucella anthropi (strain ATCC 49188 / DSM 6882 / CCUG 24695 / JCM 21032 / LMG 3331 / NBRC 15819 / NCTC 12168 / Alc 37) (Ochrobactrum anthropi).